The following is a 1032-amino-acid chain: MASSLNELNLVQVLEQASNPQHIRSDVQKLAEQQLRQWETQAGFHYLLQSIYLNLSNSLQIRWLAVIQFKNGVDKYWRSTRINAIPKDEKASIRGRLFEMIDEQNNQLCIQNAQASARIARLDFPVEWPTLFEDLENLLNDEIIRKDSVKIYNILMHINQIVKVLGTARIGRCRPAMQSKVPLILPLIVRIYLQSFEEWTTSSNLNYEDLSSLQVSYLALKVLRRIICEGYDRPQTDQSVCDFIKLSVSHFEMLISNHENFKKFDIYEKFIKCLGKLYFNLVTGSPANFILLPCSTQILITYTRLIFDKAPKVYRENSDVTGDFWEQTAIRGLLILKRVINFIHKKGAITLKARSDKLTIDASINKINTEFLNENLITRLVDTLMEWYLRLRPTELENWFMDPEEWINEQMATSYEYQIRPCAENVFQDLMNTFSELLVPYLLKKIENDASKLSNSLDDFLRKDAIYASFQLSASAVSEMVDFDRLLIQVFLPEATNTNISGDELRIIRRRVALIINEWSTVKCSEESKSLCYKLFTNFLTDEDDKVVLLTTVQTVRTMVDDWNFNKDTFQPFLTENVHLLLRKILPSVSLTETRLYVLNTLSDIIIQTKPLISRDLLVEILQIIPNLWEIATNNASEAILANALLRLLRNLVSSLGSQSHLTWDIAIPVVALACDPSSMQYQLLSEDGYELWGMLLQNFSSHDQEFDDKFVELVPFLKYGIETHTEILPTLLEIIKSYALILNPVDFFSNNTFQDIFKQMSKYLLKLREDSFQLVLEIWEILILSNESDYENLLLQKFYETGVLSALFDAIFLEEAPSSYLCSQIIQIIARISYVNPDALMTFLATYHDNLPTSNENARMPESIRKIVSKDQTYDSVVNKLLTGWIVCFRDIFDPKFKKVHILGISSLLRTGLVPILTEFSSIASLWIEMLEEINETNRGDCEKYHLNDIVTEQSIAFHPLTAEQLRYHQLCKNNDPVHNISLKDFISQSMEYLESHLGVERYQEFLKTINPSLLENLQMFLSIQPQEARP.

The residue at position 2 (alanine 2) is an N-acetylalanine. Positions 31–103 constitute an Importin N-terminal domain; the sequence is AEQQLRQWET…RGRLFEMIDE (73 aa).

Belongs to the importin beta family. Interacts with GTP-bound GSP1 and RFP1. Associates with the nuclear pore complex.

It is found in the cytoplasm. Its subcellular location is the nucleus. Its function is as follows. Functions in nuclear protein import as nuclear transport receptor. Serves as receptor for nuclear localization signals (NLS) in cargo substrates. Thought to mediate docking of the importin/substrate complex to the nuclear pore complex (NPC) through binding to nucleoporin and the complex is subsequently translocated through the pore by an energy requiring, RAN-dependent mechanism. Required for nuclear import of Ho endonuclease and RFP1, and involved in rRNA-processing and assembly or export of 60S ribosomal subunits. The polypeptide is Importin beta-like protein KAP120 (KAP120) (Saccharomyces cerevisiae (strain ATCC 204508 / S288c) (Baker's yeast)).